Here is a 315-residue protein sequence, read N- to C-terminus: DNA-directed RNA polymerase subunit alpha (315 aa).

Residues 1–228 are alpha N-terminal domain (alpha-NTD); that stretch reads MLEIEKPKIE…EHFKLFMTLT (228 aa). An alpha C-terminal domain (alpha-CTD) region spans residues 245–315; the sequence is KEKVLEMTIE…LGLGLKKSDE (71 aa).

It belongs to the RNA polymerase alpha chain family. As to quaternary structure, homodimer. The RNAP catalytic core consists of 2 alpha, 1 beta, 1 beta' and 1 omega subunit. When a sigma factor is associated with the core the holoenzyme is formed, which can initiate transcription.

The catalysed reaction is RNA(n) + a ribonucleoside 5'-triphosphate = RNA(n+1) + diphosphate. DNA-dependent RNA polymerase catalyzes the transcription of DNA into RNA using the four ribonucleoside triphosphates as substrates. This chain is DNA-directed RNA polymerase subunit alpha, found in Clostridium novyi (strain NT).